A 418-amino-acid polypeptide reads, in one-letter code: Dihydrolipoyllysine-residue acetyltransferase component of pyruvate dehydrogenase complex (418 aa).

One can recognise a Lipoyl-binding domain in the interval 2–78; that stretch reads PIKLLMPALS…PVNSLIAVLI (77 aa). Lys43 bears the N6-lipoyllysine mark. The 38-residue stretch at 133 to 170 folds into the Peripheral subunit-binding (PSBD) domain; the sequence is FASPLAKRLAKIQNVRIEEIKGSGPHGRIIKQDVLSHK. The active site involves His388.

The protein belongs to the 2-oxoacid dehydrogenase family. As to quaternary structure, forms a 24-polypeptide structural core with octahedral symmetry. Requires (R)-lipoate as cofactor.

The enzyme catalyses N(6)-[(R)-dihydrolipoyl]-L-lysyl-[protein] + acetyl-CoA = N(6)-[(R)-S(8)-acetyldihydrolipoyl]-L-lysyl-[protein] + CoA. In terms of biological role, the pyruvate dehydrogenase complex catalyzes the overall conversion of pyruvate to acetyl-CoA and CO(2). It contains multiple copies of three enzymatic components: pyruvate dehydrogenase (E1), dihydrolipoamide acetyltransferase (E2) and lipoamide dehydrogenase (E3). The polypeptide is Dihydrolipoyllysine-residue acetyltransferase component of pyruvate dehydrogenase complex (pdhC) (Rickettsia bellii (strain RML369-C)).